A 143-amino-acid chain; its full sequence is Ribulose bisphosphate carboxylase large chain (143 aa).

The propeptide occupies 1-2 (MS). Position 3 is an N-acetylproline (Pro3). Lys14 bears the N6,N6,N6-trimethyllysine mark. Xaa123 serves as a coordination point for substrate.

The protein belongs to the RuBisCO large chain family. Type I subfamily. As to quaternary structure, heterohexadecamer of 8 large chains and 8 small chains.

It localises to the plastid. Its subcellular location is the chloroplast. It catalyses the reaction 2 (2R)-3-phosphoglycerate + 2 H(+) = D-ribulose 1,5-bisphosphate + CO2 + H2O. The enzyme catalyses D-ribulose 1,5-bisphosphate + O2 = 2-phosphoglycolate + (2R)-3-phosphoglycerate + 2 H(+). In terms of biological role, ruBisCO catalyzes two reactions: the carboxylation of D-ribulose 1,5-bisphosphate, the primary event in carbon dioxide fixation, as well as the oxidative fragmentation of the pentose substrate in the photorespiration process. Both reactions occur simultaneously and in competition at the same active site. The sequence is that of Ribulose bisphosphate carboxylase large chain (rbcL) from Nemopanthus mucronatus (Catberry).